The sequence spans 203 residues: tRNA (pseudouridine(54)-N(1))-methyltransferase (203 aa).

3 residues coordinate S-adenosyl-L-methionine: Leu125, Gly146, and Cys179.

It belongs to the methyltransferase superfamily. TrmY family. As to quaternary structure, homodimer.

Its subcellular location is the cytoplasm. It catalyses the reaction pseudouridine(54) in tRNA + S-adenosyl-L-methionine = N(1)-methylpseudouridine(54) in tRNA + S-adenosyl-L-homocysteine + H(+). In terms of biological role, specifically catalyzes the N1-methylation of pseudouridine at position 54 (Psi54) in tRNAs. The polypeptide is tRNA (pseudouridine(54)-N(1))-methyltransferase (Methanopyrus kandleri (strain AV19 / DSM 6324 / JCM 9639 / NBRC 100938)).